A 460-amino-acid chain; its full sequence is GTPase Der (460 aa).

EngA-type G domains lie at 2–164 and 196–368; these read QSII…HEEF and IRVG…ENFT. GTP-binding positions include 8 to 15, 55 to 59, 116 to 119, 202 to 209, 249 to 253, and 313 to 316; these read GKPNVGKS, DSGGL, NKVD, GRVNVGKS, DTAGI, and NKWD. The KH-like domain occupies 369 to 453; that stretch reads QKIQTSKLNT…PLVIASRKKG (85 aa).

It belongs to the TRAFAC class TrmE-Era-EngA-EngB-Septin-like GTPase superfamily. EngA (Der) GTPase family. Associates with the 50S ribosomal subunit.

Its function is as follows. GTPase that plays an essential role in the late steps of ribosome biogenesis. The sequence is that of GTPase Der from Campylobacter jejuni subsp. jejuni serotype O:2 (strain ATCC 700819 / NCTC 11168).